Here is a 400-residue protein sequence, read N- to C-terminus: AA13 family lytic polysaccharide monooxygenase A (400 aa).

The first 17 residues, Met1–Gly17, serve as a signal peptide directing secretion. Position 18 (His18) interacts with Cu(2+). Residue His18 is modified to Methylhistidine. Residues His18 to Ile247 enclose the Chitin-binding type-4 domain. 7 disulfide bridges follow: Cys39–Cys42, Cys65–Cys244, Cys101–Cys202, Cys117–Cys144, Cys152–Cys160, Cys166–Cys172, and Cys180–Cys191. His108 serves as a coordination point for Cu(2+). A glycan (N-linked (GlcNAc...) asparagine) is linked at Asn119. Tyr241 is a Cu(2+) binding site. A disordered region spans residues Gly254 to Thr287. Residues Thr257–Thr287 are compositionally biased toward low complexity. In terms of domain architecture, CBM20 spans Thr293 to Arg400. N-linked (GlcNAc...) asparagine glycosylation occurs at Asn379.

The protein belongs to the polysaccharide monooxygenase AA13 family. Cu(2+) serves as cofactor. O-mannosylated.

It is found in the secreted. It catalyses the reaction starch + reduced acceptor + O2 = D-glucono-1,5-lactone-terminated malto-oligosaccharides + short-chain malto-oligosaccharides + acceptor + H2O.. Activity is inhibited by both beta-cyclodextrin or amylose that block the access to the active site. Its function is as follows. Starch-active lytic polysaccharide monooxygenase that oxidizes the C1 position of starch substrates. Catalysis by LPMOs requires the reduction of the active-site copper from Cu(II) to Cu(I) by a reducing agent and H(2)O(2) or O(2) as a cosubstrate. This Aspergillus terreus (strain NIH 2624 / FGSC A1156) protein is AA13 family lytic polysaccharide monooxygenase A.